A 610-amino-acid polypeptide reads, in one-letter code: UvrABC system protein C (610 aa).

The region spanning 16-94 (SQPGVYRMYD…IKLYQPRYNV (79 aa)) is the GIY-YIG domain. Positions 204 to 239 (QQVLTQLITRMEEASQQLHFEDAARIRDQIQAVRRV) constitute a UVR domain.

This sequence belongs to the UvrC family. In terms of assembly, interacts with UvrB in an incision complex.

The protein resides in the cytoplasm. Functionally, the UvrABC repair system catalyzes the recognition and processing of DNA lesions. UvrC both incises the 5' and 3' sides of the lesion. The N-terminal half is responsible for the 3' incision and the C-terminal half is responsible for the 5' incision. The protein is UvrABC system protein C of Yersinia pseudotuberculosis serotype O:1b (strain IP 31758).